We begin with the raw amino-acid sequence, 381 residues long: Queuine tRNA-ribosyltransferase (381 aa).

D96 functions as the Proton acceptor in the catalytic mechanism. Substrate-binding positions include 96-100, D150, Q193, and G220; that span reads DSGGF. The interval 251 to 257 is RNA binding; the sequence is GVGSPDS. D270 functions as the Nucleophile in the catalytic mechanism. An RNA binding; important for wobble base 34 recognition region spans residues 275–279; it reads TRIAR. The Zn(2+) site is built by C308, C310, C313, and H339.

Belongs to the queuine tRNA-ribosyltransferase family. As to quaternary structure, homodimer. Within each dimer, one monomer is responsible for RNA recognition and catalysis, while the other monomer binds to the replacement base PreQ1. The cofactor is Zn(2+).

It catalyses the reaction 7-aminomethyl-7-carbaguanine + guanosine(34) in tRNA = 7-aminomethyl-7-carbaguanosine(34) in tRNA + guanine. The protein operates within tRNA modification; tRNA-queuosine biosynthesis. Functionally, catalyzes the base-exchange of a guanine (G) residue with the queuine precursor 7-aminomethyl-7-deazaguanine (PreQ1) at position 34 (anticodon wobble position) in tRNAs with GU(N) anticodons (tRNA-Asp, -Asn, -His and -Tyr). Catalysis occurs through a double-displacement mechanism. The nucleophile active site attacks the C1' of nucleotide 34 to detach the guanine base from the RNA, forming a covalent enzyme-RNA intermediate. The proton acceptor active site deprotonates the incoming PreQ1, allowing a nucleophilic attack on the C1' of the ribose to form the product. After dissociation, two additional enzymatic reactions on the tRNA convert PreQ1 to queuine (Q), resulting in the hypermodified nucleoside queuosine (7-(((4,5-cis-dihydroxy-2-cyclopenten-1-yl)amino)methyl)-7-deazaguanosine). The polypeptide is Queuine tRNA-ribosyltransferase (Bacillus pumilus (strain SAFR-032)).